We begin with the raw amino-acid sequence, 192 residues long: uncharacterized protein (192 aa).

The Nudix hydrolase domain maps to 29-160; sequence HRQAAVLIPI…PLDIYRRGDS (132 aa). The short motif at 67–89 is the Nudix box element; the sequence is GAVDDTDASVIAAALREAEEEVA. The Mg(2+) site is built by glutamate 83 and glutamate 87.

This sequence belongs to the Nudix hydrolase family. PCD1 subfamily. Mn(2+) serves as cofactor. It depends on Mg(2+) as a cofactor.

In terms of biological role, probably mediates the hydrolysis of some nucleoside diphosphate derivatives. This is an uncharacterized protein from Shigella flexneri.